The sequence spans 411 residues: G1/S-specific cyclin pas1 (411 aa).

2 disordered regions span residues 210–253 (LKNQ…PSVL) and 307–326 (SLSK…VGVY). The segment covering 218–252 (PSSSPQTTQDSSPILTMAPSTPVSVGSTPPSTPSV) has biased composition (low complexity).

This sequence belongs to the cyclin family.

In terms of biological role, essential for the control of the cell cycle at the G1/S (start) transition. Interacts with the pef1 protein kinase. The pef1/pas1 complex activates the res2/cdc10 complex. The polypeptide is G1/S-specific cyclin pas1 (pas1) (Schizosaccharomyces pombe (strain 972 / ATCC 24843) (Fission yeast)).